The primary structure comprises 92 residues: Small archaeal modifier protein 3 (92 aa).

Glycyl lysine isopeptide (Lys-Gly) (interchain with G-Cter in SAMP3) cross-links involve residues K18, K55, and K62. Position 92 is a glycyl adenylate; alternate (G92). Residue G92 forms a Glycyl lysine isopeptide (Gly-Lys) (interchain with K-? in acceptor proteins); alternate linkage.

In terms of assembly, monomer. Post-translationally, the C-terminal glycine is likely acyl-adenylated (-COAMP) by UbaA.

Functions as a protein modifier covalently attached to lysine residues of substrate proteins. The protein modification process is termed sampylation and involves the formation of an isopeptide bond between the SAMP3 C-terminal glycine carboxylate and the epsilon-amino group of lysine residues on target proteins. Seems to be able to form polymeric chains with itself at Lys-18, Lys-55 and Lys-62, similar to ubiquitin and other ubiquitin-like proteins. SAMP3 appears not to serve as a proteolytic signal in the cell to target proteins for degradation by proteasomes. May regulate molybdenum cofactor (MoCo) biosynthesis by inhibiting the activity of MPT synthase MoaE under aerobic conditions, providing a hierarchy of oxygen use prior to that of alternative electron acceptors such as DMSO. This is Small archaeal modifier protein 3 (samp3) from Haloferax volcanii (strain ATCC 29605 / DSM 3757 / JCM 8879 / NBRC 14742 / NCIMB 2012 / VKM B-1768 / DS2) (Halobacterium volcanii).